We begin with the raw amino-acid sequence, 394 residues long: Fatty acid resistance protein FarA (394 aa).

Residues 1-23 (MKSGNSEPNLMETHTDETKLQNT) are disordered. A helical membrane pass occupies residues 33-53 (ALTLLFALSAAAAGSAFFLWW). Residues 356–376 (SAAGAPVSKTPGAALPEMEST) form a disordered region.

It belongs to the membrane fusion protein (MFP) (TC 8.A.1) family. In terms of assembly, probably part of a tripartite efflux system FarAB-MtrE, which is composed of an inner membrane transporter, FarB, a periplasmic membrane fusion protein, FarA, and an outer membrane component, MtrE.

It is found in the cell inner membrane. In terms of biological role, mediates resistance to long-chained antibacterial fatty acids (FAs). Function is dependent on the MtrE outer membrane protein. The polypeptide is Fatty acid resistance protein FarA (Neisseria gonorrhoeae).